The chain runs to 311 residues: Olfactory receptor 2A5 (311 aa).

Residues 1 to 24 (MTKNQTWVTEFILLGFPLSLRIQM) lie on the Extracellular side of the membrane. An N-linked (GlcNAc...) asparagine glycan is attached at N4. A helical transmembrane segment spans residues 25-48 (LLSGLFSLLYVFTLLGNGAILGLI). Residues 49-56 (WLDSRLHT) lie on the Cytoplasmic side of the membrane. The chain crosses the membrane as a helical span at residues 57 to 78 (PMYFFLSHLAIIDISYASNNVP). At 79-100 (KMLTNLGLNKRKTISFVPCTMQ) the chain is on the extracellular side. Cysteines 97 and 189 form a disulfide. Residues 101-120 (TFLYMAFAHTECLILVMMSY) form a helical membrane-spanning segment. At 121 to 139 (DRYMAICHPLQYSVIMRWG) the chain is on the cytoplasmic side. A helical transmembrane segment spans residues 140-158 (VCTVLAVTSWACGSLLALV). At 159-196 (HVVLILRLPFCGPHEINHFFCEILSVLKLACADTWLNQ) the chain is on the extracellular side. Residues 197 to 219 (VVIFAASVFILVGPLCLVLVSYS) form a helical membrane-spanning segment. Residues 220–236 (RILAAILRIQSGEGRRK) are Cytoplasmic-facing. The chain crosses the membrane as a helical span at residues 237 to 259 (AFSTCSSHLCMVGLFFGSAIVMY). Topologically, residues 260–272 (MAPKSRHPEEQQK) are extracellular. Residues 273–292 (VLSLFYSLFNPMLNPLIYSL) traverse the membrane as a helical segment. Residues 293–311 (RNAEVKGALKRVLWKQRSK) are Cytoplasmic-facing.

Belongs to the G-protein coupled receptor 1 family.

The protein resides in the cell membrane. Its function is as follows. Odorant receptor. In Homo sapiens (Human), this protein is Olfactory receptor 2A5 (OR2A5).